A 492-amino-acid polypeptide reads, in one-letter code: KRAB-A domain-containing protein 2 (492 aa).

In terms of domain architecture, KRAB spans 36 to 117; that stretch reads LFQEATAFEN…MREKFLMSVT (82 aa). Position 115 is a phosphoserine (S115). T117 is modified (phosphothreonine). An Integrase catalytic domain is found at 247 to 415; it reads RGLAPKPMTF…SPFEAMFGYK (169 aa). A coiled-coil region spans residues 427–457; it reads RETVATLQTEEELEIAEEQLENSLWIRQEER. The span at 455–465 shows a compositional bias: basic and acidic residues; that stretch reads EERAEIGADRS. A disordered region spans residues 455–492; it reads EERAEIGADRSDMDDDMDPTPEASEPSTSQGTSGLLCW. The segment covering 479–492 has biased composition (polar residues); that stretch reads EPSTSQGTSGLLCW.

This is KRAB-A domain-containing protein 2 (KRBA2) from Homo sapiens (Human).